Consider the following 235-residue polypeptide: Calcium-activated potassium channel subunit beta-2 (235 aa).

Positions 1-45 (MFIWTSGRTSSSYRHDEKRNIYQKIRDHDLLDKRKTVTALKAGED) are ball and chain. The Cytoplasmic segment spans residues 1-46 (MFIWTSGRTSSSYRHDEKRNIYQKIRDHDLLDKRKTVTALKAGEDR). A helical membrane pass occupies residues 47–67 (AILLGLAMMVCSIMMYFLLGI). Topologically, residues 68-194 (TLLRSYMQSV…VILTKLYSSN (127 aa)) are extracellular. Asn88, Asn96, and Asn119 each carry an N-linked (GlcNAc...) asparagine glycan. A helical transmembrane segment spans residues 195 to 215 (VLFHSLFWPTCMMAGGVAIVA). Residues 216–235 (MVKLTQYLSLLCERIQRINR) are Cytoplasmic-facing.

It belongs to the KCNMB (TC 8.A.14.1) family. KCNMB2 subfamily. As to quaternary structure, interacts with KCNMA1 tetramer. There are probably 4 molecules of KCMNB2 per KCNMA1 tetramer. N-glycosylated. In terms of tissue distribution, highly expressed in brain and heart. Also expressed in lung.

The protein localises to the membrane. Regulatory subunit of the calcium activated potassium KCNMA1 (maxiK) channel. Modulates the calcium sensitivity and gating kinetics of KCNMA1, thereby contributing to KCNMA1 channel diversity. Acts as a negative regulator that confers rapid and complete inactivation of KCNMA1 channel complex. The sequence is that of Calcium-activated potassium channel subunit beta-2 (Kcnmb2) from Rattus norvegicus (Rat).